A 198-amino-acid chain; its full sequence is Holliday junction branch migration complex subunit RuvA (198 aa).

A domain I region spans residues 1 to 63; it reads MIAYLSGAVR…EDAQLLFGFL (63 aa). Residues 64–142 form a domain II region; it reads DTDSLRLFDL…EHLAAGAPVS (79 aa). A flexible linker region spans residues 143-150; the sequence is AGKAALTS. The tract at residues 150–198 is domain III; that stretch reads STAGRDAIEALLALGFREPQVRSVVAELLAADPEQSADALIRKGLGKLR.

The protein belongs to the RuvA family. In terms of assembly, homotetramer. Forms an RuvA(8)-RuvB(12)-Holliday junction (HJ) complex. HJ DNA is sandwiched between 2 RuvA tetramers; dsDNA enters through RuvA and exits via RuvB. An RuvB hexamer assembles on each DNA strand where it exits the tetramer. Each RuvB hexamer is contacted by two RuvA subunits (via domain III) on 2 adjacent RuvB subunits; this complex drives branch migration. In the full resolvosome a probable DNA-RuvA(4)-RuvB(12)-RuvC(2) complex forms which resolves the HJ.

It localises to the cytoplasm. In terms of biological role, the RuvA-RuvB-RuvC complex processes Holliday junction (HJ) DNA during genetic recombination and DNA repair, while the RuvA-RuvB complex plays an important role in the rescue of blocked DNA replication forks via replication fork reversal (RFR). RuvA specifically binds to HJ cruciform DNA, conferring on it an open structure. The RuvB hexamer acts as an ATP-dependent pump, pulling dsDNA into and through the RuvAB complex. HJ branch migration allows RuvC to scan DNA until it finds its consensus sequence, where it cleaves and resolves the cruciform DNA. This chain is Holliday junction branch migration complex subunit RuvA, found in Deinococcus geothermalis (strain DSM 11300 / CIP 105573 / AG-3a).